Reading from the N-terminus, the 120-residue chain is Ribosome-binding factor A (120 aa).

Belongs to the RbfA family. As to quaternary structure, monomer. Binds 30S ribosomal subunits, but not 50S ribosomal subunits or 70S ribosomes.

It is found in the cytoplasm. Its function is as follows. One of several proteins that assist in the late maturation steps of the functional core of the 30S ribosomal subunit. Associates with free 30S ribosomal subunits (but not with 30S subunits that are part of 70S ribosomes or polysomes). Required for efficient processing of 16S rRNA. May interact with the 5'-terminal helix region of 16S rRNA. In Clostridium botulinum (strain ATCC 19397 / Type A), this protein is Ribosome-binding factor A.